The following is a 440-amino-acid chain: Dihydrolipoyllysine-residue acetyltransferase component of pyruvate dehydrogenase complex (440 aa).

One can recognise a Lipoyl-binding domain in the interval 2–78 (SIEVKMPALS…AVGQVIAVMA (77 aa)). Residue Lys43 is modified to N6-lipoyllysine. The segment at 91–113 (ASSQISEPSEKADVAQKETADSE) is disordered. Positions 98-110 (PSEKADVAQKETA) are enriched in basic and acidic residues. A Peripheral subunit-binding (PSBD) domain is found at 149 to 186 (KASPLAKRLAKKNHVDLKQVNGSGPHGRIIKADIEAFI). A compositionally biased stretch (polar residues) spans 192–202 (ASSNPSVSTPE). The interval 192-214 (ASSNPSVSTPEASGKITHDTPHN) is disordered. The active site involves His412.

The protein belongs to the 2-oxoacid dehydrogenase family. In terms of assembly, forms a 24-polypeptide structural core with octahedral symmetry. The cofactor is (R)-lipoate.

The catalysed reaction is N(6)-[(R)-dihydrolipoyl]-L-lysyl-[protein] + acetyl-CoA = N(6)-[(R)-S(8)-acetyldihydrolipoyl]-L-lysyl-[protein] + CoA. Its function is as follows. The pyruvate dehydrogenase complex catalyzes the overall conversion of pyruvate to acetyl-CoA and CO(2). It contains multiple copies of three enzymatic components: pyruvate dehydrogenase (E1), dihydrolipoamide acetyltransferase (E2) and lipoamide dehydrogenase (E3). The chain is Dihydrolipoyllysine-residue acetyltransferase component of pyruvate dehydrogenase complex (pdhC) from Zymomonas mobilis subsp. mobilis (strain ATCC 31821 / ZM4 / CP4).